We begin with the raw amino-acid sequence, 219 residues long: Dehydration-responsive element-binding protein 1E (219 aa).

Low complexity predominate over residues 1-19 (MEWAYYGSGYSSSGTPSPV). Residues 1–44 (MEWAYYGSGYSSSGTPSPVGGDGDEDSYMTVSSAPPKRRAGRTK) form a disordered region. The segment at residues 52 to 109 (VYKGVRSRNPGRWVCEVREPHGKQRIWLGTFETAEMAARAHDVAAMALRGRAACLNFA) is a DNA-binding region (AP2/ERF).

This sequence belongs to the AP2/ERF transcription factor family. ERF subfamily.

It is found in the nucleus. Functionally, transcriptional activator that binds specifically to the DNA sequence 5'-[AG]CCGAC-3'. Binding to the C-repeat/DRE element mediates high salinity- and dehydration-inducible transcription. The protein is Dehydration-responsive element-binding protein 1E (DREB1E) of Oryza sativa subsp. indica (Rice).